Consider the following 103-residue polypeptide: Large ribosomal subunit protein bL21 (103 aa).

It belongs to the bacterial ribosomal protein bL21 family. In terms of assembly, part of the 50S ribosomal subunit. Contacts protein L20.

Its function is as follows. This protein binds to 23S rRNA in the presence of protein L20. The chain is Large ribosomal subunit protein bL21 from Mycolicibacterium paratuberculosis (strain ATCC BAA-968 / K-10) (Mycobacterium paratuberculosis).